We begin with the raw amino-acid sequence, 625 residues long: tRNA-guanine(15) transglycosylase (625 aa).

D86 (nucleophile) is an active-site residue. D121 and G184 together coordinate substrate. The region spanning 546-621 (GLRVVVDDES…VAVKVHEGVN (76 aa)) is the PUA domain.

It belongs to the archaeosine tRNA-ribosyltransferase family. Zn(2+) serves as cofactor.

The enzyme catalyses guanosine(15) in tRNA + 7-cyano-7-deazaguanine = 7-cyano-7-carbaguanosine(15) in tRNA + guanine. Its pathway is tRNA modification; archaeosine-tRNA biosynthesis. In terms of biological role, exchanges the guanine residue with 7-cyano-7-deazaguanine (preQ0) at position 15 in the dihydrouridine loop (D-loop) of archaeal tRNAs. In Picrophilus torridus (strain ATCC 700027 / DSM 9790 / JCM 10055 / NBRC 100828 / KAW 2/3), this protein is tRNA-guanine(15) transglycosylase.